A 479-amino-acid polypeptide reads, in one-letter code: Pyruvate kinase (479 aa).

Residue arginine 36 participates in substrate binding. K(+) is bound by residues asparagine 38, serine 40, and aspartate 70. 38 to 41 (NFSH) serves as a coordination point for ATP. Positions 77 and 160 each coordinate ATP. Residue glutamate 225 coordinates Mg(2+). Glycine 251, aspartate 252, and threonine 284 together coordinate substrate. Aspartate 252 serves as a coordination point for Mg(2+).

This sequence belongs to the pyruvate kinase family. In terms of assembly, homotetramer. Mg(2+) is required as a cofactor. It depends on K(+) as a cofactor.

It carries out the reaction pyruvate + ATP = phosphoenolpyruvate + ADP + H(+). It participates in carbohydrate degradation; glycolysis; pyruvate from D-glyceraldehyde 3-phosphate: step 5/5. Its activity is regulated as follows. Allosterically activated by AMP and by several sugar phosphates. Belongs to type II PK. The sequence is that of Pyruvate kinase (pykA) from Buchnera aphidicola subsp. Baizongia pistaciae (strain Bp).